We begin with the raw amino-acid sequence, 2089 residues long: Non-reducing polyketide synthase PKS16 (2089 aa).

Positions 8–243 (VLFGDQTVDP…IKLPITAAFH (236 aa)) are N-terminal acylcarrier protein transacylase (SAT) domain (SAT). A disordered region spans residues 342-364 (AGIEVSRSTEMQPRQEQRTKPRS). Over residues 354 to 364 (PRQEQRTKPRS) the composition is skewed to basic and acidic residues. Positions 364 to 793 (SSDIAIIGYA…GGNTSLLIED (430 aa)) constitute a Ketosynthase family 3 (KS3) domain. Active-site for beta-ketoacyl synthase activity residues include Cys536, His671, and His710. Residues 891 to 1214 (VFLFTGQGSQ…SIANAYNSGV (324 aa)) form a malonyl-CoA:ACP transacylase (MAT) domain region. The tract at residues 1273 to 1586 (TTCLQVIENE…KRTTLQSLLG (314 aa)) is product template (PT) domain. The segment at 1276 to 1408 (LQVIENETFT…CTVMYGDGHQ (133 aa)) is N-terminal hotdog fold. The PKS/mFAS DH domain occupies 1276 to 1582 (LQVIENETFT…FQQMKRTTLQ (307 aa)). His1309 functions as the Proton acceptor; for dehydratase activity in the catalytic mechanism. Positions 1435-1582 (IHRMLKEMIY…FQQMKRTTLQ (148 aa)) are C-terminal hotdog fold. The active-site Proton donor; for dehydratase activity is Asp1495. Residues 1617 to 1694 (QSPVAGFSKV…ELRAFFLDKM (78 aa)) enclose the Carrier 1 domain. O-(pantetheine 4'-phosphoryl)serine is present on Ser1654. Residues 1697–1730 (PQATANDDDSDDSSDDEGPGFSRSQSNSTISTPE) form a disordered region. Acidic residues predominate over residues 1702–1714 (NDDDSDDSSDDEG). Over residues 1718-1728 (SRSQSNSTIST) the composition is skewed to polar residues. The Carrier 2 domain maps to 1729 to 1806 (PEEPDVVNVL…DVQKALGAAP (78 aa)). Position 1766 is an O-(pantetheine 4'-phosphoryl)serine (Ser1766). The interval 1848–2083 (LFLLPDGAGS…VVGGNHFSIM (236 aa)) is thioesterase (TE) domain.

It functions in the pathway secondary metabolite biosynthesis. Functionally, non-reducing polyketide synthase; part of the gene cluster that mediates the biosynthesis of orcinol depsidone grayanic acid (GRA), the only major secondary metabolite known in C.grayi. The first step consists in the ring and depside synthesis by PKS16 leading to 4-O-demethylsphaerophorin, involving different orcinol-like rings, one with acetyl CoA and the other with octanoyl CoA as the starter. Further depsidone formation by the GRA cluster-specific cytochrome P450 leads to 4-O-demethylgrayanic acid. Finally, the cluster specific O-methyltransferase probably converts the 4-O-demethylgrayanic acid into grayanic acid. This is Non-reducing polyketide synthase PKS16 from Cladonia grayi (Gray's cup lichen).